Here is a 267-residue protein sequence, read N- to C-terminus: Trehalose 2-sulfotransferase (267 aa).

Alpha,alpha-trehalose-binding positions include glutamine 14, 33–39, proline 48, and tryptophan 53; that span reads EPQEFFQ. Glutamate 36 serves as the catalytic Proton acceptor.

This sequence belongs to the Stf0 sulfotransferase family. As to quaternary structure, homodimer.

It carries out the reaction alpha,alpha-trehalose + 3'-phosphoadenylyl sulfate = 2-O-sulfo-alpha,alpha-trehalose + adenosine 3',5'-bisphosphate + H(+). It participates in glycolipid metabolism. In terms of biological role, catalyzes the sulfuryl group transfer from 3'-phosphoadenosine-5'-phosphosulfate (PAPS) to trehalose, leading to trehalose-2-sulfate (T2S). The sulfation of trehalose is the first step in the biosynthesis of sulfolipid-1 (SL-1), a major cell wall glycolipid and the most abundant sulfated metabolite found in Mycobacterium tuberculosis, that is a potential virulence factor thought to mediate host-pathogen interactions. The polypeptide is Trehalose 2-sulfotransferase (Mycobacterium tuberculosis (strain ATCC 35801 / TMC 107 / Erdman)).